The sequence spans 349 residues: S-adenosylmethionine:tRNA ribosyltransferase-isomerase (349 aa).

Belongs to the QueA family. In terms of assembly, monomer.

It localises to the cytoplasm. It carries out the reaction 7-aminomethyl-7-carbaguanosine(34) in tRNA + S-adenosyl-L-methionine = epoxyqueuosine(34) in tRNA + adenine + L-methionine + 2 H(+). It functions in the pathway tRNA modification; tRNA-queuosine biosynthesis. Its function is as follows. Transfers and isomerizes the ribose moiety from AdoMet to the 7-aminomethyl group of 7-deazaguanine (preQ1-tRNA) to give epoxyqueuosine (oQ-tRNA). This is S-adenosylmethionine:tRNA ribosyltransferase-isomerase from Flavobacterium psychrophilum (strain ATCC 49511 / DSM 21280 / CIP 103535 / JIP02/86).